Consider the following 944-residue polypeptide: 2-oxoglutarate dehydrogenase E1 component (944 aa).

The segment at 914–944 (RRRRSSPAEGDPTVHKKEQERIVSDSLTRKN) is disordered. The segment covering 925 to 936 (PTVHKKEQERIV) has biased composition (basic and acidic residues).

This sequence belongs to the alpha-ketoglutarate dehydrogenase family. Homodimer. Part of the 2-oxoglutarate dehydrogenase (OGDH) complex composed of E1 (2-oxoglutarate dehydrogenase), E2 (dihydrolipoamide succinyltransferase) and E3 (dihydrolipoamide dehydrogenase); the complex contains multiple copies of the three enzymatic components (E1, E2 and E3). Requires thiamine diphosphate as cofactor.

The catalysed reaction is N(6)-[(R)-lipoyl]-L-lysyl-[protein] + 2-oxoglutarate + H(+) = N(6)-[(R)-S(8)-succinyldihydrolipoyl]-L-lysyl-[protein] + CO2. E1 component of the 2-oxoglutarate dehydrogenase (OGDH) complex which catalyzes the decarboxylation of 2-oxoglutarate, the first step in the conversion of 2-oxoglutarate to succinyl-CoA and CO(2). In Bacillus licheniformis (strain ATCC 14580 / DSM 13 / JCM 2505 / CCUG 7422 / NBRC 12200 / NCIMB 9375 / NCTC 10341 / NRRL NRS-1264 / Gibson 46), this protein is 2-oxoglutarate dehydrogenase E1 component.